We begin with the raw amino-acid sequence, 310 residues long: Isoflavone reductase homolog A622 (310 aa).

NADP(+) is bound by residues 13 to 19, R38, and K47; that span reads GGTGYIG. K135 acts as the Proton acceptor in catalysis. An NADP(+)-binding site is contributed by R139.

It belongs to the NmrA-type oxidoreductase family. Isoflavone reductase subfamily. Monomer. As to expression, expressed in roots and stems.

It localises to the cytoplasm. Its pathway is alkaloid biosynthesis; nicotine biosynthesis. Its function is as follows. NADPH-binding protein. Involved in the biosynthesis of pyridine alkaloid natural products, leading mainly to the production of anabasine, anatabine, nicotine and nornicotine, effective deterrents against herbivores with antiparasitic and pesticide properties (neurotoxins); nornicotine serves as the precursor in the synthesis of the carcinogen compound N'-nitrosonornicotine (NNN). Reductase involved in a late step of tobacco alkaloid biosynthesis. Triggers either the formation of a nicotinic acid-derived precursor or the final condensation reaction of tobacco alkaloids. In Nicotiana sylvestris (Wood tobacco), this protein is Isoflavone reductase homolog A622.